Consider the following 191-residue polypeptide: Probable ribosome biogenesis protein RLP24 (191 aa).

A Phosphoserine modification is found at serine 136.

It belongs to the eukaryotic ribosomal protein eL24 family. In terms of assembly, associated with nucleolar and cytoplasmic pre-60S particles. At the end of biogenesis it dissociates from cytoplasmic pre-60S particles and is likely to be exchanged for its ribosomal homologue, RPL24.

It is found in the nucleus. Its subcellular location is the nucleolus. Functionally, involved in the biogenesis of the 60S ribosomal subunit. Ensures the docking of NOG1 to pre-60S particles. The chain is Probable ribosome biogenesis protein RLP24 (RpL24-like) from Drosophila melanogaster (Fruit fly).